We begin with the raw amino-acid sequence, 247 residues long: ATP synthase subunit a, chloroplastic (247 aa).

Transmembrane regions (helical) follow at residues 38-58 (QVLI…IVTV), 95-115 (VPFI…GALL), 134-154 (INTT…AGLS), 199-219 (LVVV…VMFL), and 220-240 (GLFT…AYIG).

It belongs to the ATPase A chain family. As to quaternary structure, F-type ATPases have 2 components, CF(1) - the catalytic core - and CF(0) - the membrane proton channel. CF(1) has five subunits: alpha(3), beta(3), gamma(1), delta(1), epsilon(1). CF(0) has four main subunits: a, b, b' and c.

The protein resides in the plastid. The protein localises to the chloroplast thylakoid membrane. In terms of biological role, key component of the proton channel; it plays a direct role in the translocation of protons across the membrane. The chain is ATP synthase subunit a, chloroplastic from Populus alba (White poplar).